Reading from the N-terminus, the 366-residue chain is Histone-lysine N-methyltransferase SETD7 (366 aa).

MORN repeat units lie at residues 36–58 (FEGNFVHGEKNGRGKFFFFDGST), 59–81 (LEGYYVDDALQGQGVYTYEDGGV), and 106–128 (FKGQYKDNIRHGVCWIYYPDGGS). One can recognise an SET domain in the interval 214-336 (ERVYVAESLI…ADEELTVAYG (123 aa)). Residues 226–228 (AGE), N296, H297, and E356 contribute to the S-adenosyl-L-methionine site.

This sequence belongs to the class V-like SAM-binding methyltransferase superfamily. Histone-lysine methyltransferase family. SET7 subfamily. Interacts with IPF1/PDX-1. Widely expressed. Expressed in pancreatic islets.

It localises to the nucleus. The protein resides in the chromosome. It catalyses the reaction L-lysyl(4)-[histone H3] + S-adenosyl-L-methionine = N(6)-methyl-L-lysyl(4)-[histone H3] + S-adenosyl-L-homocysteine + H(+). The catalysed reaction is L-lysyl-[protein] + S-adenosyl-L-methionine = N(6)-methyl-L-lysyl-[protein] + S-adenosyl-L-homocysteine + H(+). Functionally, histone methyltransferase that specifically monomethylates 'Lys-4' of histone H3. H3 'Lys-4' methylation represents a specific tag for epigenetic transcriptional activation. Plays a central role in the transcriptional activation of genes such as collagenase or insulin. Recruited by IPF1/PDX-1 to the insulin promoter, leading to activate transcription. Also has methyltransferase activity toward non-histone proteins such as CGAS, p53/TP53, TAF10, and possibly TAF7 by recognizing and binding the [KR]-[STA]-K in substrate proteins. Monomethylates 'Lys-189' of TAF10, leading to increase the affinity of TAF10 for RNA polymerase II. Monomethylates 'Lys-372' of p53/TP53, stabilizing p53/TP53 and increasing p53/TP53-mediated transcriptional activation. Monomethylates 'Lys-491' of CGAS, promoting interaction between SGF29 and CGAS. This chain is Histone-lysine N-methyltransferase SETD7 (SETD7), found in Homo sapiens (Human).